A 182-amino-acid polypeptide reads, in one-letter code: Large ribosomal subunit protein uL15 (182 aa).

Positions 1 to 52 (MDLSSLRPAKGAVKNKKRIGRGPGSGNGTTAGKGNKGQQSRSGYTRPVSEGG) are disordered. Residues 21 to 35 (RGPGSGNGTTAGKGN) show a composition bias toward gly residues.

It belongs to the universal ribosomal protein uL15 family. Part of the 50S ribosomal subunit.

Binds to the 23S rRNA. The chain is Large ribosomal subunit protein uL15 from Chlorobium phaeobacteroides (strain BS1).